The following is a 338-amino-acid chain: Ketol-acid reductoisomerase (NADP(+)) (338 aa).

A KARI N-terminal Rossmann domain is found at Met1 to Thr181. Residues Tyr24–Gln27, Arg47, and Ser52 contribute to the NADP(+) site. The active site involves His107. An NADP(+)-binding site is contributed by Gly133. Residues Asn182 to Ile327 enclose the KARI C-terminal knotted domain. Mg(2+)-binding residues include Asp190, Glu194, Glu226, and Glu230. Ser251 provides a ligand contact to substrate.

The protein belongs to the ketol-acid reductoisomerase family. Requires Mg(2+) as cofactor.

The enzyme catalyses (2R)-2,3-dihydroxy-3-methylbutanoate + NADP(+) = (2S)-2-acetolactate + NADPH + H(+). It carries out the reaction (2R,3R)-2,3-dihydroxy-3-methylpentanoate + NADP(+) = (S)-2-ethyl-2-hydroxy-3-oxobutanoate + NADPH + H(+). The protein operates within amino-acid biosynthesis; L-isoleucine biosynthesis; L-isoleucine from 2-oxobutanoate: step 2/4. It participates in amino-acid biosynthesis; L-valine biosynthesis; L-valine from pyruvate: step 2/4. In terms of biological role, involved in the biosynthesis of branched-chain amino acids (BCAA). Catalyzes an alkyl-migration followed by a ketol-acid reduction of (S)-2-acetolactate (S2AL) to yield (R)-2,3-dihydroxy-isovalerate. In the isomerase reaction, S2AL is rearranged via a Mg-dependent methyl migration to produce 3-hydroxy-3-methyl-2-ketobutyrate (HMKB). In the reductase reaction, this 2-ketoacid undergoes a metal-dependent reduction by NADPH to yield (R)-2,3-dihydroxy-isovalerate. This Herminiimonas arsenicoxydans protein is Ketol-acid reductoisomerase (NADP(+)).